The following is an 86-amino-acid chain: Small ribosomal subunit protein bS20 (86 aa).

Positions 1–22 (MANIKSQIKRIRTNERRRLRNQ) are disordered. Over residues 7–20 (QIKRIRTNERRRLR) the composition is skewed to basic residues.

It belongs to the bacterial ribosomal protein bS20 family.

In terms of biological role, binds directly to 16S ribosomal RNA. The polypeptide is Small ribosomal subunit protein bS20 (Mycolicibacterium smegmatis (strain ATCC 700084 / mc(2)155) (Mycobacterium smegmatis)).